The sequence spans 156 residues: Small ribosomal subunit protein uS7 (156 aa).

This sequence belongs to the universal ribosomal protein uS7 family. Part of the 30S ribosomal subunit. Contacts proteins S9 and S11.

Its function is as follows. One of the primary rRNA binding proteins, it binds directly to 16S rRNA where it nucleates assembly of the head domain of the 30S subunit. Is located at the subunit interface close to the decoding center, probably blocks exit of the E-site tRNA. The sequence is that of Small ribosomal subunit protein uS7 from Streptomyces griseus subsp. griseus (strain JCM 4626 / CBS 651.72 / NBRC 13350 / KCC S-0626 / ISP 5235).